The following is a 410-amino-acid chain: Elongation factor Tu (410 aa).

The tr-type G domain occupies 10–214; the sequence is KPHVNIGTIG…EVDAYIPTPE (205 aa). Residues 19–26 are G1; it reads GHVDHGKT. Residue 19-26 coordinates GTP; the sequence is GHVDHGKT. T26 contributes to the Mg(2+) binding site. The segment at 60–64 is G2; that stretch reads GITIN. Residues 81-84 form a G3 region; sequence DCPG. GTP is bound by residues 81 to 85 and 136 to 139; these read DCPGH and NKED. Residues 136-139 are G4; it reads NKED. The G5 stretch occupies residues 174-176; the sequence is SAL.

Belongs to the TRAFAC class translation factor GTPase superfamily. Classic translation factor GTPase family. EF-Tu/EF-1A subfamily. Monomer.

The protein resides in the cytoplasm. It carries out the reaction GTP + H2O = GDP + phosphate + H(+). In terms of biological role, GTP hydrolase that promotes the GTP-dependent binding of aminoacyl-tRNA to the A-site of ribosomes during protein biosynthesis. In Gloeothece citriformis (strain PCC 7424) (Cyanothece sp. (strain PCC 7424)), this protein is Elongation factor Tu.